Here is a 279-residue protein sequence, read N- to C-terminus: Small ribosomal subunit protein uS9m (279 aa).

This sequence belongs to the universal ribosomal protein uS9 family.

It localises to the mitochondrion. This chain is Small ribosomal subunit protein uS9m (MRPS9), found in Eremothecium gossypii (strain ATCC 10895 / CBS 109.51 / FGSC 9923 / NRRL Y-1056) (Yeast).